The following is a 450-amino-acid chain: Oxygen-independent coproporphyrinogen III oxidase (450 aa).

One can recognise a Radical SAM core domain in the interval 42–276 (LPAGASASLY…CAIANALKEA (235 aa)). Tyrosine 51 lines the S-adenosyl-L-methionine pocket. Residues cysteine 57 and cysteine 61 each coordinate [4Fe-4S] cluster. Tyrosine 63 is an S-adenosyl-L-methionine binding site. [4Fe-4S] cluster is bound at residue cysteine 64. S-adenosyl-L-methionine is bound by residues glycine 108, 109–110 (GT), glutamate 141, glutamine 168, arginine 180, aspartate 205, alanine 239, and isoleucine 325.

This sequence belongs to the anaerobic coproporphyrinogen-III oxidase family. In terms of assembly, monomer. It depends on [4Fe-4S] cluster as a cofactor.

The protein resides in the cytoplasm. The enzyme catalyses coproporphyrinogen III + 2 S-adenosyl-L-methionine = protoporphyrinogen IX + 2 5'-deoxyadenosine + 2 L-methionine + 2 CO2. It participates in porphyrin-containing compound metabolism; protoporphyrin-IX biosynthesis; protoporphyrinogen-IX from coproporphyrinogen-III (AdoMet route): step 1/1. Functionally, involved in the heme biosynthesis. Catalyzes the anaerobic oxidative decarboxylation of propionate groups of rings A and B of coproporphyrinogen III to yield the vinyl groups in protoporphyrinogen IX. The chain is Oxygen-independent coproporphyrinogen III oxidase (hemN) from Bradyrhizobium diazoefficiens (strain JCM 10833 / BCRC 13528 / IAM 13628 / NBRC 14792 / USDA 110).